A 171-amino-acid polypeptide reads, in one-letter code: Small ribosomal subunit protein uS5 (171 aa).

Positions 13–76 (FLERLVAVNR…DQAKKNLVTI (64 aa)) constitute an S5 DRBM domain.

This sequence belongs to the universal ribosomal protein uS5 family. Part of the 30S ribosomal subunit. Contacts proteins S4 and S8.

Its function is as follows. With S4 and S12 plays an important role in translational accuracy. Functionally, located at the back of the 30S subunit body where it stabilizes the conformation of the head with respect to the body. This Dichelobacter nodosus (strain VCS1703A) protein is Small ribosomal subunit protein uS5.